Here is a 177-residue protein sequence, read N- to C-terminus: GTP-dependent dephospho-CoA kinase (177 aa).

GTP-binding residues include aspartate 45, valine 46, valine 47, aspartate 64, and glutamate 120.

The protein belongs to the GTP-dependent DPCK family.

The catalysed reaction is 3'-dephospho-CoA + GTP = GDP + CoA + H(+). Its pathway is cofactor biosynthesis; coenzyme A biosynthesis. Its function is as follows. Catalyzes the GTP-dependent phosphorylation of the 3'-hydroxyl group of dephosphocoenzyme A to form coenzyme A (CoA). This Halobacterium salinarum (strain ATCC 29341 / DSM 671 / R1) protein is GTP-dependent dephospho-CoA kinase.